The following is a 593-amino-acid chain: Chromosomal replication initiator protein DnaA (593 aa).

Positions 1-71 (MSDPCWEQCV…EIISNSDAGP (71 aa)) are domain I, interacts with DnaA modulators. The segment at 71-256 (PKSLEIAVAQ…DVEGGIQHKH (186 aa)) is domain II. Residues 97–186 (AVPVPDPLPS…STESSADRER (90 aa)) form a disordered region. Positions 113-124 (SFQPPKGNTSAD) are enriched in polar residues. The tract at residues 257–473 (NLNTTFIFDN…GALKRVIANA (217 aa)) is domain III, AAA+ region. 4 residues coordinate ATP: Gly-301, Gly-303, Lys-304, and Thr-305. Residues 474 to 593 (QFTQRSISVE…VKNLLRTLTT (120 aa)) are domain IV, binds dsDNA.

The protein belongs to the DnaA family. As to quaternary structure, oligomerizes as a right-handed, spiral filament on DNA at oriC.

The protein resides in the cytoplasm. Functionally, plays an essential role in the initiation and regulation of chromosomal replication. ATP-DnaA binds to the origin of replication (oriC) to initiate formation of the DNA replication initiation complex once per cell cycle. Binds the DnaA box (a 9 base pair repeat at the origin) and separates the double-stranded (ds)DNA. Forms a right-handed helical filament on oriC DNA; dsDNA binds to the exterior of the filament while single-stranded (ss)DNA is stabiized in the filament's interior. The ATP-DnaA-oriC complex binds and stabilizes one strand of the AT-rich DNA unwinding element (DUE), permitting loading of DNA polymerase. After initiation quickly degrades to an ADP-DnaA complex that is not apt for DNA replication. Binds acidic phospholipids. The chain is Chromosomal replication initiator protein DnaA from Teredinibacter turnerae (strain ATCC 39867 / T7901).